The primary structure comprises 201 residues: Dephospho-CoA kinase (201 aa).

The region spanning 4–201 is the DPCK domain; the sequence is SVGLTGNIAS…KYLREAKIKQ (198 aa). 12–17 serves as a coordination point for ATP; it reads ASGKST.

This sequence belongs to the CoaE family.

The protein resides in the cytoplasm. It carries out the reaction 3'-dephospho-CoA + ATP = ADP + CoA + H(+). Its pathway is cofactor biosynthesis; coenzyme A biosynthesis; CoA from (R)-pantothenate: step 5/5. Catalyzes the phosphorylation of the 3'-hydroxyl group of dephosphocoenzyme A to form coenzyme A. The chain is Dephospho-CoA kinase from Legionella pneumophila (strain Paris).